The chain runs to 1790 residues: MSCVHYKFSSKLNYDTVTFDGLHISLCDLKKQIMGREKLKAADSDLQITNAQTKEEYTDDNALIPKNSSVIVRRIPIGGVKSTSKTYVISRTEPVMGTTKAIDDASASISLAQLTKTANLAEANASEEDKIKAMMSQSGHEYDPINYMKKTLVGPPPPSYTCFRCGKPGHYIKNCPTNGDKNFESGPRIKKSTGIPRSFMMEVKDPNMKGAMLTNTGKYAIPTIDAEAYAIGKKEKPPFLPEEPSSSSEEDDPIPDELLCLICKDIMTDAVVIPCCGNSYCDECIRTALLESDEHTCPTCHQNDVSPDALIANKFLRQAVNNFKNETGYTKRLRKQLPPPPPPVPPPRPLMQRNLQPLMRSPISRQQDPLMIPVTSSSAHSAPSISSLTSNPSALAPSVSGNPSSAPAPVPDITATVSISVHSEKSDGPFRDSDNKLLPAAALTSEHSKGASSIAITALMEEKGYQVPVLGTPSLLGQSLLHGQLIPTTGPVRINAARPGGGRPGWEHSNKLGYLVSPPQQIRRGERSCYRSINRGRHHSERSQRTQGPSLPATPVFVPVPPPPLYPPPPHTLPLPPGVPPPQFSPQFPPGQPPPAGYSVPPPGFPPAPANISTPWVSSGVQTAHSNTIPTTQAPPLSREEFYREQRRLKEEEKKKSKLDEFTNDFAKELMEYKKIQKERRRSFSRSKSPYSGSSYSRSSYTYSKSRSGSTRSRSYSRSFSRSHSRSYSRSPPYPRRGRGKSRNYRSRSRSHGYHRSRSRSPPYRRYHSRSRSPQAFRGQSPTKRNVPQGETEREYFNRYREVPPPYDIKAYYGRSVDFRDPFEKERYREWERKYREWYEKYYKGYAVGAQPRPSANREDFSPERLLPLNIRNSPFTRGRREDYAAGQSHRNRNLGGNYPEKLSTRDSHNAKDNPKSKEKESENVPGDGKGNKHKKHRKRRKGEESESFLNPELLETSRKCRESSGIDETKTDTLFVLPSRDDATPVRDEPMDAESITFKSVSDKDKREKDKPKVKSDKTKRKSDGSATAKKDNVLKPSKGPQEKVDGDREKSPRSEPPLKKAKEEATKIDSVKPSSSSQKDEKVTGTPRKAHSKSAKEHQEAKPAKDEKVKKDCSKDIKSEKPASKDEKAKKPEKNKLLDSKGEKRKRKTEEKSVDKDFESSSMKISKVEGTEIVKPSPKRKMEGDVEKLERTPEKDKIASSTTPAKKIKLNRETGKKIGNAENASTTKEPSEKLESTSSKIKQEKVKGKAKRKVAGSEGSSSTLVDYTSTSSTGGSPVRKSEEKTDTKRTVIKTMEEYNNDNTAPAEDVIIMIQVPQSKWDKDDFESEEEDVKTTQPIQSVGKPSSIIKNVTTKPSATAKYTEKESEQPEKLQKLPKEASHELMQHELRSSKGSASSEKGRAKDREHSGSEKDNPDKRKSGAQPDKESTVDRLSEQGHFKTLSQSSKETRTSEKHESVRGSSNKDFTPGRDKKVDYDSRDYSSSKRRDERGELARRKDSPPRGKESLSGQKSKLREERDLPKKGAESKKSNSSPPRDKKPHDHKAPYETKRPCEETKPVDKNSGKEREKHAAEARNGKESSGGKLPCIPNPPDPPMEKELAAGQVEKSAVKPKPQLSHSSRLSSDLTRETDEAAFEPDYNESDSESNVSVKEEEAVASISKDLKEKTTEKAKESLTVATASQPGADRSQSQSSPSVSPSRSHSPSGSQTRSHSSSASSAGSQDSKKKKKKKEKKKHKKHKKHKKHKKHAGADGDVEKSQKHKHKKKKAKKNKDKEKEKDDQKVRSVTV.

Positions 4–76 (VHYKFSSKLN…NSSVIVRRIP (73 aa)) constitute a DWNN domain. Lys-130 carries the post-translational modification N6-acetyllysine. The segment at 160–177 (YTCFRCGKPGHYIKNCPT) adopts a CCHC-type zinc-finger fold. 4 positions are modified to phosphoserine: Ser-245, Ser-246, Ser-247, and Ser-248. Residues 260 to 301 (CLICKDIMTDAVVIPCCGNSYCDECIRTALLESDEHTCPTCH) form an RING-type; degenerate zinc finger. The segment at 329–353 (YTKRLRKQLPPPPPPVPPPRPLMQR) is disordered. The span at 337–349 (LPPPPPPVPPPRP) shows a compositional bias: pro residues. A Phosphoserine modification is found at Ser-361. The interval 374–408 (VTSSSAHSAPSISSLTSNPSALAPSVSGNPSSAPA) is disordered. Residues 376-390 (SSSAHSAPSISSLTS) show a composition bias toward low complexity. Ser-517 is subject to Phosphoserine. 4 disordered regions span residues 533 to 599 (INRG…AGYS), 622 to 641 (QTAHSNTIPTTQAPPLSREE), 648 to 667 (RLKEEEKKKSKLDEFTNDFA), and 675 to 797 (KIQK…REYF). Residues 558-599 (VPVPPPPLYPPPPHTLPLPPGVPPPQFSPQFPPGQPPPAGYS) are compositionally biased toward pro residues. The span at 622 to 635 (QTAHSNTIPTTQAP) shows a compositional bias: polar residues. Residues 686–720 (RSKSPYSGSSYSRSSYTYSKSRSGSTRSRSYSRSF) are compositionally biased toward low complexity. Over residues 736 to 771 (RRGRGKSRNYRSRSRSHGYHRSRSRSPPYRRYHSRS) the composition is skewed to basic residues. Phosphoserine is present on residues Ser-769, Ser-771, Ser-773, Ser-781, Ser-816, Ser-862, and Ser-874. Disordered regions lie at residues 850–1292 (AQPR…TKRT) and 1322–1790 (WDKD…SVTV). A compositionally biased stretch (basic and acidic residues) spans 903-923 (LSTRDSHNAKDNPKSKEKESE). Positions 932 to 941 (NKHKKHRKRR) are enriched in basic residues. 5 stretches are compositionally biased toward basic and acidic residues: residues 956–972 (ETSRKCRESSGIDETKT), 980–991 (SRDDATPVRDEP), 1002–1018 (VSDKDKREKDKPKVKSD), 1042–1072 (PQEKVDGDREKSPRSEPPLKKAKEEATKIDS), and 1096–1161 (SAKE…KDFE). Ser-958 carries the phosphoserine modification. The segment at 983-1139 (DATPVRDEPM…KAKKPEKNKL (157 aa)) is interaction with RB1. Thr-985 is modified (phosphothreonine). Residues Lys-1107 and Lys-1169 each participate in a glycyl lysine isopeptide (Lys-Gly) (interchain with G-Cter in SUMO2) cross-link. Ser-1179 is modified (phosphoserine). Basic and acidic residues-rich tracts occupy residues 1182-1200 (RKMEGDVEKLERTPEKDKI) and 1231-1249 (EPSEKLESTSSKIKQEKVK). Over residues 1260–1277 (EGSSSTLVDYTSTSSTGG) the composition is skewed to polar residues. Residue Thr-1272 is modified to Phosphothreonine. Phosphoserine is present on Ser-1278. Residues 1281–1291 (RKSEEKTDTKR) are compositionally biased toward basic and acidic residues. Residues Ser-1329, Ser-1342, and Ser-1348 each carry the phosphoserine modification. Over residues 1336-1358 (TTQPIQSVGKPSSIIKNVTTKPS) the composition is skewed to polar residues. Basic and acidic residues-rich tracts occupy residues 1363–1392 (YTEKESEQPEKLQKLPKEASHELMQHELRS), 1400–1440 (EKGR…EQGH), 1449–1460 (KETRTSEKHESV), 1469–1507 (TPGRDKKVDYDSRDYSSSKRRDERGELARRKDSPPRGKE), and 1515–1580 (KLRE…RNGK). Positions 1434 to 1544 (RLSEQGHFKT…SPPRDKKPHD (111 aa)) are interaction with p53. Thr-1469 carries the phosphothreonine modification. Over residues 1618 to 1627 (LSHSSRLSSD) the composition is skewed to polar residues. Over residues 1634–1646 (EAAFEPDYNESDS) the composition is skewed to acidic residues. Phosphoserine is present on residues Ser-1646, Ser-1648, and Ser-1651. The segment covering 1663–1675 (KDLKEKTTEKAKE) has biased composition (basic and acidic residues). The span at 1689 to 1724 (RSQSQSSPSVSPSRSHSPSGSQTRSHSSSASSAGSQ) shows a compositional bias: low complexity. Residues 1727-1750 (KKKKKKKEKKKHKKHKKHKKHKKH) show a composition bias toward basic residues. Basic and acidic residues predominate over residues 1751 to 1760 (AGADGDVEKS). Residues 1761–1773 (QKHKHKKKKAKKN) are compositionally biased toward basic residues. Basic and acidic residues predominate over residues 1774–1790 (KDKEKEKDDQKVRSVTV).

As to quaternary structure, interacts with MDM2 and YBX1. Also interacts with p53/TP53 and RB1. Interacts with NEK6. Interacts with ZBTB38. Post-translationally, phosphorylated by NEK6. As to expression, highly expressed in testis. Expressed at lower levels in brain, heart, kidney, liver, lung, skeletal muscle, spleen, thymus and tongue.

Its subcellular location is the nucleus. It localises to the nucleolus. The protein localises to the chromosome. It is found in the cytoplasm. The protein resides in the cytoskeleton. Its subcellular location is the microtubule organizing center. It localises to the centrosome. The enzyme catalyses S-ubiquitinyl-[E2 ubiquitin-conjugating enzyme]-L-cysteine + [acceptor protein]-L-lysine = [E2 ubiquitin-conjugating enzyme]-L-cysteine + N(6)-ubiquitinyl-[acceptor protein]-L-lysine.. The protein operates within protein modification; protein ubiquitination. Its function is as follows. E3 ubiquitin-protein ligase which promotes ubiquitination of YBX1, leading to its degradation by the proteasome. May play a role as a scaffold protein to promote the assembly of the p53/TP53-MDM2 complex, resulting in increase of MDM2-mediated ubiquitination and degradation of p53/TP53; may function as negative regulator of p53/TP53, leading to both apoptosis and cell growth retardation. Regulates DNA-replication and common fragile sites (CFS) stability in a ZBTB38- and MCM10-dependent manner. Controls ZBTB38 protein stability and abundance via ubiquitination and proteasomal degradation, and ZBTB38 in turn negatively regulates the expression of MCM10 which plays an important role in DNA-replication. This Mus musculus (Mouse) protein is E3 ubiquitin-protein ligase RBBP6 (Rbbp6).